The sequence spans 155 residues: Large ribosomal subunit protein eL24 (155 aa).

Residues Val-119 to Arg-155 are disordered. A compositionally biased stretch (low complexity) spans Lys-124–Lys-133.

Belongs to the eukaryotic ribosomal protein eL24 family.

This is Large ribosomal subunit protein eL24 (RpL24) from Drosophila melanogaster (Fruit fly).